The chain runs to 222 residues: UPF0758 protein YicR (222 aa).

Residues 100–222 form the MPN domain; that stretch reads PLLSPEMTRE…YVSFAERGWI (123 aa). Positions 171, 173, and 184 each coordinate Zn(2+). The JAMM motif motif lies at 171 to 184; the sequence is HNHPSGCAEPSKAD.

Belongs to the UPF0758 family. YicR subfamily.

The protein is UPF0758 protein YicR of Escherichia coli (strain K12 / MC4100 / BW2952).